Consider the following 315-residue polypeptide: Putative purine nucleoside phosphorylase (315 aa).

Phosphate contacts are provided by residues S49, H81, 103 to 105, and A135; that span reads RYH. E220 lines the a purine D-ribonucleoside pocket. S239 contributes to the phosphate binding site. Position 262 (N262) interacts with a purine D-ribonucleoside.

This sequence belongs to the PNP/MTAP phosphorylase family.

It is found in the cytoplasm. The protein resides in the nucleus. It carries out the reaction a purine D-ribonucleoside + phosphate = a purine nucleobase + alpha-D-ribose 1-phosphate. Its pathway is purine metabolism; purine nucleoside salvage. Its function is as follows. The purine nucleoside phosphorylases catalyze the phosphorolytic breakdown of the N-glycosidic bond in the beta-(deoxy)ribonucleoside molecules, with the formation of the corresponding free purine bases and pentose-1-phosphate. Cleaves guanosine and inosine. In Schizosaccharomyces pombe (strain 972 / ATCC 24843) (Fission yeast), this protein is Putative purine nucleoside phosphorylase.